We begin with the raw amino-acid sequence, 358 residues long: Alanine racemase (358 aa).

Lys-34 functions as the Proton acceptor; specific for D-alanine in the catalytic mechanism. Lys-34 bears the N6-(pyridoxal phosphate)lysine mark. Arg-130 contacts substrate. Catalysis depends on Tyr-254, which acts as the Proton acceptor; specific for L-alanine. Position 302 (Met-302) interacts with substrate.

Belongs to the alanine racemase family. The cofactor is pyridoxal 5'-phosphate.

It carries out the reaction L-alanine = D-alanine. It functions in the pathway amino-acid biosynthesis; D-alanine biosynthesis; D-alanine from L-alanine: step 1/1. Functionally, catalyzes the interconversion of L-alanine and D-alanine. May also act on other amino acids. The chain is Alanine racemase (alr) from Actinobacillus succinogenes (strain ATCC 55618 / DSM 22257 / CCUG 43843 / 130Z).